Consider the following 343-residue polypeptide: MKFLDQAKVYVRSGDGGAGSVSFRREKFIEFGGPDGGDGGRGGDVWLEAVDGLNTLIDYRYQQHFKAKTGVHGMGRNMTGAKGADVTLKVPAGTQVFEEDNETLICDLTVVGQRFLLAKGGNGGFGNQHFKTSTNQAPRRANPGLPGEELNIWLRLKLIADAGLVGLPNAGKSTFLAAVTAAKPKIADYPFTTLHPGLGVARIDAREFVIADIPGLIEGAHEGVGIGDRFLGHVERTRVLLHLVSAQEENPGKAYKTVRAELDAYGNGLIEKVEILALSQVDTLDADARRKKVASLKRAAGRAPMLLSAVTGEGVEAVLRALMTVIAEARAEAAPVVETRWEK.

The Obg domain occupies 1–159 (MKFLDQAKVY…LNIWLRLKLI (159 aa)). In terms of domain architecture, OBG-type G spans 160-327 (ADAGLVGLPN…VLRALMTVIA (168 aa)). GTP-binding positions include 166-173 (GLPNAGKS), 191-195 (FTTLH), 212-215 (DIPG), 279-282 (SQVD), and 308-310 (SAV). Mg(2+) is bound by residues Ser173 and Thr193.

Belongs to the TRAFAC class OBG-HflX-like GTPase superfamily. OBG GTPase family. As to quaternary structure, monomer. Mg(2+) is required as a cofactor.

It localises to the cytoplasm. Functionally, an essential GTPase which binds GTP, GDP and possibly (p)ppGpp with moderate affinity, with high nucleotide exchange rates and a fairly low GTP hydrolysis rate. Plays a role in control of the cell cycle, stress response, ribosome biogenesis and in those bacteria that undergo differentiation, in morphogenesis control. This is GTPase Obg from Mesorhizobium japonicum (strain LMG 29417 / CECT 9101 / MAFF 303099) (Mesorhizobium loti (strain MAFF 303099)).